Reading from the N-terminus, the 775-residue chain is Beta-galactosidase 7 (775 aa).

The signal sequence occupies residues 1 to 17 (MRGGMAITAALVVVAAA). Glu-185 functions as the Proton donor in the catalytic mechanism. The Nucleophile role is filled by Glu-256. Residues Asn-257, Asn-266, Asn-277, Asn-358, and Asn-602 are each glycosylated (N-linked (GlcNAc...) asparagine). An SUEL-type lectin domain is found at 689 to 775 (RGKVPKVRIW…KSLLVVADCR (87 aa)).

It belongs to the glycosyl hydrolase 35 family.

Its subcellular location is the secreted. It is found in the extracellular space. The protein resides in the apoplast. It catalyses the reaction Hydrolysis of terminal non-reducing beta-D-galactose residues in beta-D-galactosides.. This Oryza sativa subsp. japonica (Rice) protein is Beta-galactosidase 7.